Reading from the N-terminus, the 447-residue chain is Putative metabolite transport protein HI_0418 (447 aa).

Topologically, residues 1–28 (MCKPQQKHYGRQVMNTQNSLKQVATATM) are cytoplasmic. The chain crosses the membrane as a helical span at residues 29-49 (VGTAIEYFDNYIYAMAAVLVF). At 50–63 (NHQFFHAVDPLSGQ) the chain is on the periplasmic side. A helical membrane pass occupies residues 64–84 (IAALSTLALTFIARPLGAILF). Over 85 to 96 (GHFGDRFGRKNT) the chain is Cytoplasmic. A helical membrane pass occupies residues 97–117 (FVMSLLLMGISTVVIGLLPTY). At 118-119 (DS) the chain is on the periplasmic side. The chain crosses the membrane as a helical span at residues 120 to 140 (IGIWATILLCLCRIGQGIGLG). Over 141 to 167 (GEWGGAALVAVENAPEGKRGWYGTFPQ) the chain is Cytoplasmic. The chain crosses the membrane as a helical span at residues 168 to 188 (LGAPLGLLLANGVFLGITAIF). The Periplasmic segment spans residues 189 to 194 (GQEAMT). Residues 195–215 (EWAWRIPFLSSVILVAIGLYV) traverse the membrane as a helical segment. Residues 216 to 249 (RLKLTEAPIFLAALNKPKPKRLPMLEVVTTHFKP) lie on the Cytoplasmic side of the membrane. Residues 250–270 (FFLGMLVCIAGYVLFYIMIAF) form a helical membrane-spanning segment. Residues 271–295 (SQIYAKSAPTVSEAGYAMGLGFSPQ) lie on the Periplasmic side of the membrane. Residues 296–316 (IFTALLMASAVSLAITIAASG) form a helical membrane-spanning segment. Residues 317 to 325 (KYIDKIGRR) lie on the Cytoplasmic side of the membrane. Residues 326 to 346 (TWLIWTTVGVAIFGLSLPLFL) traverse the membrane as a helical segment. Residues 347 to 354 (ENGTTTSL) lie on the Periplasmic side of the membrane. A helical membrane pass occupies residues 355–375 (FWFLFIGMGLIGMGYGPLASF). Over 376-390 (LPELFPTHARYSGAS) the chain is Cytoplasmic. A helical membrane pass occupies residues 391 to 411 (LTYNIAGLFGASVAAIIALPL). The Periplasmic portion of the chain corresponds to 412 to 418 (NAHYGLK). A helical transmembrane segment spans residues 419 to 439 (GVGIYLTLNAVLSLVGLWFIS). Residues 440–447 (ETKDKLLS) lie on the Cytoplasmic side of the membrane.

This sequence belongs to the major facilitator superfamily. Metabolite:H+ Symporter (MHS) family (TC 2.A.1.6) family.

The protein localises to the cell inner membrane. The polypeptide is Putative metabolite transport protein HI_0418 (Haemophilus influenzae (strain ATCC 51907 / DSM 11121 / KW20 / Rd)).